The sequence spans 324 residues: Ribonucleoside-diphosphate reductase subunit beta nrdF2 (324 aa).

The Fe cation site is built by glutamate 103 and histidine 106. Tyrosine 110 is an active-site residue. Glutamate 163, glutamate 197, and histidine 200 together coordinate Fe cation.

It belongs to the ribonucleoside diphosphate reductase small chain family. As to quaternary structure, tetramer of two alpha and two beta subunits. Fe cation serves as cofactor.

The catalysed reaction is a 2'-deoxyribonucleoside 5'-diphosphate + [thioredoxin]-disulfide + H2O = a ribonucleoside 5'-diphosphate + [thioredoxin]-dithiol. Functionally, provides the precursors necessary for DNA synthesis. Catalyzes the biosynthesis of deoxyribonucleotides from the corresponding ribonucleotides. This Mycobacterium tuberculosis (strain CDC 1551 / Oshkosh) protein is Ribonucleoside-diphosphate reductase subunit beta nrdF2 (nrdF2).